The primary structure comprises 191 residues: Fe/S biogenesis protein NfuA (191 aa).

[4Fe-4S] cluster is bound by residues Cys-149 and Cys-152.

It belongs to the NfuA family. Homodimer. [4Fe-4S] cluster serves as cofactor.

In terms of biological role, involved in iron-sulfur cluster biogenesis. Binds a 4Fe-4S cluster, can transfer this cluster to apoproteins, and thereby intervenes in the maturation of Fe/S proteins. Could also act as a scaffold/chaperone for damaged Fe/S proteins. This is Fe/S biogenesis protein NfuA from Enterobacter sp. (strain 638).